The following is a 528-amino-acid chain: Cytochrome P450 monooxygenase lenC (528 aa).

Residues 5–27 (FVLPHPASMGASCILGLLLLTIL) traverse the membrane as a helical segment. Cysteine 469 is a binding site for heme.

It belongs to the cytochrome P450 family. The cofactor is heme.

The protein localises to the membrane. Its pathway is alkaloid biosynthesis. Its function is as follows. Nonribosomal peptide synthetase; part of the gene cluster that mediates the biosynthesis of the ergot alkaloids lentopeptins A and B. Within the pathway, lenC catalyzes the post-NRPS oxidative modification steps using as substrate the N-acyldiketopiperazine intermediate produced by the NRPS lenA. Lentopeptin A forms via a stereospecific hydroxylation, followed by a spontaneous bicyclic lactam core formation, while lentopeptin B is produced through an initial dehydrogenation, followed by a bicyclic lactam core formation and stereospecific hydration. The phenylalanine ammonia-lyase lenB provides the cinnamic acid starter unit to the NRPS lenA for the synthesis of the N-acyldiketopiperazine intermediate which in turn is converted into lentopeptins A and B by lenC. This chain is Cytochrome P450 monooxygenase lenC, found in Aspergillus lentulus.